We begin with the raw amino-acid sequence, 407 residues long: Biflaviolin synthase CYP158A1 (407 aa).

The span at 1 to 11 (MTQETTTLTGQ) shows a compositional bias: polar residues. A disordered region spans residues 1–20 (MTQETTTLTGQSPPPVRDWP). Flaviolin is bound by residues arginine 92, tyrosine 199, and 290 to 291 (HR). Cysteine 356 contacts heme.

The protein belongs to the cytochrome P450 family. It depends on heme as a cofactor.

It catalyses the reaction 2 flaviolin + 2 reduced [2Fe-2S]-[ferredoxin] + O2 + H(+) = 3,3'-biflaviolin + 2 oxidized [2Fe-2S]-[ferredoxin] + 2 H2O. The enzyme catalyses 2 flaviolin + 2 reduced [2Fe-2S]-[ferredoxin] + O2 + H(+) = 3,8'-biflaviolin + 2 oxidized [2Fe-2S]-[ferredoxin] + 2 H2O. It participates in pigment biosynthesis. In terms of biological role, catalyzes oxidative C-C coupling reaction to polymerize flaviolin and form highly conjugated pigments which protect the soil bacterium from deleterious effects of UV irradiation (two isomers of biflaviolin and one triflaviolin). This Streptomyces coelicolor (strain ATCC BAA-471 / A3(2) / M145) protein is Biflaviolin synthase CYP158A1.